Consider the following 438-residue polypeptide: Adenylosuccinate synthetase (438 aa).

GTP is bound by residues 13–19 and 41–43; these read GDEGKGK and GHT. The active-site Proton acceptor is Asp14. 2 residues coordinate Mg(2+): Asp14 and Gly41. IMP contacts are provided by residues 14–17, 39–42, Thr130, Arg144, Gln225, Thr240, and Arg312; these read DEGK and NAGH. His42 functions as the Proton donor in the catalytic mechanism. A substrate-binding site is contributed by 308–314; the sequence is ATTGRQR. GTP contacts are provided by residues Arg314, 340 to 342, and 422 to 424; these read KLD and STG.

This sequence belongs to the adenylosuccinate synthetase family. In terms of assembly, homodimer. The cofactor is Mg(2+).

It localises to the cytoplasm. It catalyses the reaction IMP + L-aspartate + GTP = N(6)-(1,2-dicarboxyethyl)-AMP + GDP + phosphate + 2 H(+). Its pathway is purine metabolism; AMP biosynthesis via de novo pathway; AMP from IMP: step 1/2. Functionally, plays an important role in the de novo pathway of purine nucleotide biosynthesis. Catalyzes the first committed step in the biosynthesis of AMP from IMP. The chain is Adenylosuccinate synthetase from Vesicomyosocius okutanii subsp. Calyptogena okutanii (strain HA).